A 201-amino-acid chain; its full sequence is Cell division protein SepF (201 aa).

The segment at 1–94 is disordered; the sequence is MALKDLFSGF…TTSKNNARNV (94 aa). Residues 13–28 show a composition bias toward acidic residues; the sequence is VEEEDDELEAPPEENE. The segment covering 35–44 has biased composition (low complexity); the sequence is PKQQAQSQNQ. Polar residues predominate over residues 59–88; it reads SIQSVPKKQSTRLQQSSGERKYQMNNTTSK.

It belongs to the SepF family. As to quaternary structure, homodimer. Interacts with FtsZ.

It is found in the cytoplasm. Its function is as follows. Cell division protein that is part of the divisome complex and is recruited early to the Z-ring. Probably stimulates Z-ring formation, perhaps through the cross-linking of FtsZ protofilaments. Its function overlaps with FtsA. In Staphylococcus saprophyticus subsp. saprophyticus (strain ATCC 15305 / DSM 20229 / NCIMB 8711 / NCTC 7292 / S-41), this protein is Cell division protein SepF.